A 1089-amino-acid chain; its full sequence is Translocase of chloroplast 120, chloroplastic (1089 aa).

Glycine 2 carries the post-translational modification N-acetylglycine. Disordered regions lie at residues alanine 158 to serine 179, threonine 255 to arginine 339, and glutamine 353 to glutamate 381. The segment covering glutamate 165 to glycine 176 has biased composition (polar residues). Phosphoserine is present on residues serine 179, serine 263, and serine 283. A compositionally biased stretch (basic and acidic residues) spans glutamate 300–glutamate 312. Residues alanine 327 to arginine 339 show a composition bias toward low complexity. Over residues glutamine 353–alanine 374 the composition is skewed to polar residues. Residues aspartate 454–glutamine 683 form the AIG1-type G domain. The interval glycine 463–serine 470 is G1. Residues glycine 466–alanine 471 and aspartate 485–glycine 490 each bind GTP. Serine 470 is a Mg(2+) binding site. The segment at aspartate 485–glutamine 488 is homodimerization. A G2 region spans residues valine 489–lysine 493. Residues aspartate 510–glycine 513 are G3. The segment at arginine 548–serine 553 is homodimerization. The segment at threonine 582 to alanine 585 is G4. GTP contacts are provided by residues histidine 583 and glutamate 631–asparagine 632. The G5 stretch occupies residues glutamate 631–histidine 633. The tract at residues proline 710–glutamate 748 is disordered. Residues glutamine 713 to glutamate 737 show a composition bias toward acidic residues. Residues arginine 767–lysine 788 adopt a coiled-coil conformation. The chain crosses the membrane as a helical span at residues leucine 1064–tyrosine 1080.

Belongs to the TRAFAC class TrmE-Era-EngA-EngB-Septin-like GTPase superfamily. AIG1/Toc34/Toc159-like paraseptin GTPase family. TOC159 subfamily. As to quaternary structure, homodimer. Part of the TOC core complex that includes 1 protein for the specific recognition of transit peptides surrounded by a ring composed of four proteins forming translocation channels, and four to five GTP-binding proteins providing energy. This core complex can interact with components of the TIC complex to form a larger import complex. Chloroplastic protein precursor such as prSS (precursor of the RuBisCO small subunit) interacts with these complexes. The TOC complex contains a specific subset of polar lipids such as digalactosyldiacylglyceride (DGDG), phosphatidylcholine (PC) and phosphatidylglycerol (PG). The cofactor is Mg(2+). In terms of processing, phosphorylated by KOC1. In terms of tissue distribution, expressed in seedlings, flowers, and roots.

It localises to the plastid. Its subcellular location is the chloroplast outer membrane. The protein localises to the cytoplasm. GTPase involved in protein precursor import into chloroplasts. Seems to recognize chloroplast-destined precursor proteins and regulate their presentation to the translocation channel through GTP hydrolysis. Probably specialized in the import of nuclear encoded non-photosynthetic preproteins from the cytoplasm to the chloroplast. This Arabidopsis thaliana (Mouse-ear cress) protein is Translocase of chloroplast 120, chloroplastic.